A 399-amino-acid polypeptide reads, in one-letter code: Acetate kinase (399 aa).

Asn-7 is a Mg(2+) binding site. Lys-14 serves as a coordination point for ATP. Arg-89 contributes to the substrate binding site. Catalysis depends on Asp-146, which acts as the Proton donor/acceptor. ATP is bound by residues 206–210 (HLGNG), 280–282 (DMR), and 328–332 (GIGEN). Glu-382 is a binding site for Mg(2+).

This sequence belongs to the acetokinase family. Homodimer. Requires Mg(2+) as cofactor. The cofactor is Mn(2+).

It localises to the cytoplasm. The catalysed reaction is acetate + ATP = acetyl phosphate + ADP. Its pathway is metabolic intermediate biosynthesis; acetyl-CoA biosynthesis; acetyl-CoA from acetate: step 1/2. Functionally, catalyzes the formation of acetyl phosphate from acetate and ATP. Can also catalyze the reverse reaction. The protein is Acetate kinase of Campylobacter fetus subsp. fetus (strain 82-40).